The primary structure comprises 103 residues: Small ribosomal subunit protein uS10 (103 aa).

The protein belongs to the universal ribosomal protein uS10 family. In terms of assembly, part of the 30S ribosomal subunit.

Involved in the binding of tRNA to the ribosomes. The protein is Small ribosomal subunit protein uS10 of Sphingopyxis alaskensis (strain DSM 13593 / LMG 18877 / RB2256) (Sphingomonas alaskensis).